The primary structure comprises 308 residues: ADP-L-glycero-D-manno-heptose-6-epimerase (308 aa).

Residues 10–11, 31–32, K38, K53, 75–79, and N92 each bind NADP(+); these read FI, DN, and EGACS. Y139 functions as the Proton acceptor in the catalytic mechanism. K143 serves as a coordination point for NADP(+). A substrate-binding site is contributed by N168. Residues V169 and K177 each contribute to the NADP(+) site. K177 functions as the Proton acceptor in the catalytic mechanism. Substrate is bound by residues S179, H186, 200 to 203, R208, and Y271; that span reads FAGS.

It belongs to the NAD(P)-dependent epimerase/dehydratase family. HldD subfamily. Homopentamer. NADP(+) serves as cofactor.

It carries out the reaction ADP-D-glycero-beta-D-manno-heptose = ADP-L-glycero-beta-D-manno-heptose. It functions in the pathway nucleotide-sugar biosynthesis; ADP-L-glycero-beta-D-manno-heptose biosynthesis; ADP-L-glycero-beta-D-manno-heptose from D-glycero-beta-D-manno-heptose 7-phosphate: step 4/4. In terms of biological role, catalyzes the interconversion between ADP-D-glycero-beta-D-manno-heptose and ADP-L-glycero-beta-D-manno-heptose via an epimerization at carbon 6 of the heptose. The chain is ADP-L-glycero-D-manno-heptose-6-epimerase from Haemophilus influenzae (strain 86-028NP).